We begin with the raw amino-acid sequence, 110 residues long: Protein YcgL (110 aa).

The YcgL domain occupies 14–98 (MFCVIYRSSK…PPEDLLKQHL (85 aa)). Positions 88–110 (PPPEDLLKQHLSSVGQNTSHADR) are disordered. Positions 97–110 (HLSSVGQNTSHADR) are enriched in polar residues.

This is Protein YcgL from Salmonella schwarzengrund (strain CVM19633).